The sequence spans 990 residues: Bacteriophage adsorption protein A (990 aa).

The N-terminal stretch at 1 to 27 (MKENNLNRVIGWSGLLLTSLLSTSALA) is a signal peptide. 3 TPR repeats span residues 81–114 (IPLTLYLAEAYRHFGHDDRARLLLEDQLKRHPGD), 612–645 (ANAYVARATIYRQRHNVPAAVSDLRAALELEPNN), and 646–679 (SNTQAALGYALWDSGDIAQSREMLEPAHKGLPDD).

As to quaternary structure, (Microbial infection) Interacts with N4 phage non-contractile sheath protein; this interaction is essential for viral adsorption to the host.

The protein localises to the cell outer membrane. Its function is as follows. (Microbial infection) Allows N4 phage attachment by binding to the viral non-contractile sheath protein. The chain is Bacteriophage adsorption protein A (nfrA) from Escherichia coli (strain K12).